Consider the following 911-residue polypeptide: Protein translocase subunit SecA (911 aa).

ATP is bound by residues Q86, 104–108 (GEGKT), and D512. Positions 895, 897, 906, and 907 each coordinate Zn(2+).

It belongs to the SecA family. As to quaternary structure, monomer and homodimer. Part of the essential Sec protein translocation apparatus which comprises SecA, SecYEG and auxiliary proteins SecDF-YajC and YidC. Zn(2+) is required as a cofactor.

Its subcellular location is the cell inner membrane. The protein localises to the cytoplasm. It carries out the reaction ATP + H2O + cellular proteinSide 1 = ADP + phosphate + cellular proteinSide 2.. Functionally, part of the Sec protein translocase complex. Interacts with the SecYEG preprotein conducting channel. Has a central role in coupling the hydrolysis of ATP to the transfer of proteins into and across the cell membrane, serving both as a receptor for the preprotein-SecB complex and as an ATP-driven molecular motor driving the stepwise translocation of polypeptide chains across the membrane. This Bordetella bronchiseptica (strain ATCC BAA-588 / NCTC 13252 / RB50) (Alcaligenes bronchisepticus) protein is Protein translocase subunit SecA.